Consider the following 754-residue polypeptide: MTILTHTLGFPRVGLRRELKKAQESYWAGNSTREALLAVGRELRARHWEQQKQAGIDLLPVGDFAWYDHVLTTSLLLGNVPARHQNNDGSVDIDTLFRIGRGRAPTGEPAAAAEMTKWFNTNYHYIVPEFSKGQQFRLTWTQLLEEVDEALALGHKIKPVLLGPVTYLWLGKVKGEPFDRLTLLKDILPVYQHVLAELAKRGVEWVQIDEPALVLELPQAWLDAFKPAYDALAGQVKLLLTTYFEGVTPNLDTIIALPVQGLHVDLIHGKDDVAELHQRLPVDWLLSAGLINGRNVWRADLTEKYAQINAIVGKRALWVASSCSLLHSPIDLSVETRLDTEVKSWFAFALQKCGELALLRDALNSGETAALEEWSAPIQARRHSRRVHNAAVEKRLAAITAQASQRENPYEVRAEAQRARFKLPAWPTTTIGSFPQTTEIRGLRLDFKKGNLDANNYRTGIAEHIKQAIIEQERLGLDVLVHGEAERNDMVEYFGEHLDGFVFTQNGWVQSYGSRCVKPPVVIGDISRPAPITVEWAKYAQSLTDKPVKGMLTGPVTILCWSFPREDVTRETIAKQIALALRDEVADLEAAGIGIIQIDEPALREGLPLRRSDWDAYLEWGVEAFRINAAVAKDETQIHTHMCYCEFNDIMDSIAALDADVITIETSRSDMELLESFEAFDYPNEIGPGVYDIHSPNVPSVEWIEALLKKAAQRIPAQRLWVNPDCGLKTRGWPETRAALANMVKAAHNLRQAK.

5-methyltetrahydropteroyltri-L-glutamate-binding positions include 17–20 and lysine 117; that span reads RELK. L-homocysteine contacts are provided by residues 431-433 and glutamate 484; that span reads IGS. L-methionine contacts are provided by residues 431 to 433 and glutamate 484; that span reads IGS. 5-methyltetrahydropteroyltri-L-glutamate-binding positions include 515–516 and tryptophan 561; that span reads RC. Aspartate 599 contacts L-homocysteine. Aspartate 599 is an L-methionine binding site. Glutamate 605 serves as a coordination point for 5-methyltetrahydropteroyltri-L-glutamate. Zn(2+) contacts are provided by histidine 641, cysteine 643, and glutamate 665. The active-site Proton donor is the histidine 694. Position 726 (cysteine 726) interacts with Zn(2+).

The protein belongs to the vitamin-B12 independent methionine synthase family. The cofactor is Zn(2+).

The enzyme catalyses 5-methyltetrahydropteroyltri-L-glutamate + L-homocysteine = tetrahydropteroyltri-L-glutamate + L-methionine. It functions in the pathway amino-acid biosynthesis; L-methionine biosynthesis via de novo pathway; L-methionine from L-homocysteine (MetE route): step 1/1. Functionally, catalyzes the transfer of a methyl group from 5-methyltetrahydrofolate to homocysteine resulting in methionine formation. This chain is 5-methyltetrahydropteroyltriglutamate--homocysteine methyltransferase, found in Salmonella enteritidis PT4 (strain P125109).